Reading from the N-terminus, the 637-residue chain is 1-deoxy-D-xylulose-5-phosphate synthase (637 aa).

Residues His74 and 115 to 117 (GHS) each bind thiamine diphosphate. Asp146 lines the Mg(2+) pocket. Thiamine diphosphate-binding positions include 147–148 (GA), Asn175, Tyr285, and Glu366. Asn175 serves as a coordination point for Mg(2+).

It belongs to the transketolase family. DXPS subfamily. Homodimer. Mg(2+) serves as cofactor. It depends on thiamine diphosphate as a cofactor.

The catalysed reaction is D-glyceraldehyde 3-phosphate + pyruvate + H(+) = 1-deoxy-D-xylulose 5-phosphate + CO2. It functions in the pathway metabolic intermediate biosynthesis; 1-deoxy-D-xylulose 5-phosphate biosynthesis; 1-deoxy-D-xylulose 5-phosphate from D-glyceraldehyde 3-phosphate and pyruvate: step 1/1. Catalyzes the acyloin condensation reaction between C atoms 2 and 3 of pyruvate and glyceraldehyde 3-phosphate to yield 1-deoxy-D-xylulose-5-phosphate (DXP). The polypeptide is 1-deoxy-D-xylulose-5-phosphate synthase (Pelotomaculum thermopropionicum (strain DSM 13744 / JCM 10971 / SI)).